We begin with the raw amino-acid sequence, 396 residues long: Phosphopentomutase (396 aa).

Residues aspartate 13, aspartate 288, histidine 293, aspartate 329, histidine 330, and histidine 341 each contribute to the Mn(2+) site.

The protein belongs to the phosphopentomutase family. Mn(2+) serves as cofactor.

The protein resides in the cytoplasm. It catalyses the reaction 2-deoxy-alpha-D-ribose 1-phosphate = 2-deoxy-D-ribose 5-phosphate. The enzyme catalyses alpha-D-ribose 1-phosphate = D-ribose 5-phosphate. It functions in the pathway carbohydrate degradation; 2-deoxy-D-ribose 1-phosphate degradation; D-glyceraldehyde 3-phosphate and acetaldehyde from 2-deoxy-alpha-D-ribose 1-phosphate: step 1/2. Its function is as follows. Isomerase that catalyzes the conversion of deoxy-ribose 1-phosphate (dRib-1-P) and ribose 1-phosphate (Rib-1-P) to deoxy-ribose 5-phosphate (dRib-5-P) and ribose 5-phosphate (Rib-5-P), respectively. The polypeptide is Phosphopentomutase (Clostridium beijerinckii (strain ATCC 51743 / NCIMB 8052) (Clostridium acetobutylicum)).